Here is a 348-residue protein sequence, read N- to C-terminus: Fasciculation and elongation protein zeta-2 (348 aa).

A disordered region spans residues 11–40 (YEFQEPAGSVQEQENCNASPEAGAGAHAGG). 3 positions are modified to phosphoserine: S130, S171, and S190. The stretch at 206 to 280 (ERVKRLSVSE…TAKKKKKLKS (75 aa)) forms a coiled coil. Residues 265–296 (QKEHKETAKKKKKLKSGSSQNGRSERSHMPGT) are disordered.

Belongs to the zygin family. Homodimer; disulfide-linked. May form heterodimers with FEZ1. Interacts with synaptotagmin.

Involved in axonal outgrowth and fasciculation. The sequence is that of Fasciculation and elongation protein zeta-2 (Fez2) from Mus musculus (Mouse).